We begin with the raw amino-acid sequence, 503 residues long: UDP-N-acetylmuramate--L-alanine ligase (503 aa).

120-126 (GTHGKTS) contacts ATP.

It belongs to the MurCDEF family.

Its subcellular location is the cytoplasm. The enzyme catalyses UDP-N-acetyl-alpha-D-muramate + L-alanine + ATP = UDP-N-acetyl-alpha-D-muramoyl-L-alanine + ADP + phosphate + H(+). Its pathway is cell wall biogenesis; peptidoglycan biosynthesis. Its function is as follows. Cell wall formation. This Rhodococcus opacus (strain B4) protein is UDP-N-acetylmuramate--L-alanine ligase.